Consider the following 138-residue polypeptide: Putative acyl-CoA thioesterase YneP (138 aa).

The active site involves D16.

It belongs to the 4-hydroxybenzoyl-CoA thioesterase family.

Has acyl-CoA thioesterase activity. The sequence is that of Putative acyl-CoA thioesterase YneP (yneP) from Bacillus subtilis (strain 168).